We begin with the raw amino-acid sequence, 149 residues long: 3-hydroxyacyl-[acyl-carrier-protein] dehydratase FabZ (149 aa).

Histidine 53 is an active-site residue.

This sequence belongs to the thioester dehydratase family. FabZ subfamily.

Its subcellular location is the cytoplasm. It catalyses the reaction a (3R)-hydroxyacyl-[ACP] = a (2E)-enoyl-[ACP] + H2O. In terms of biological role, involved in unsaturated fatty acids biosynthesis. Catalyzes the dehydration of short chain beta-hydroxyacyl-ACPs and long chain saturated and unsaturated beta-hydroxyacyl-ACPs. This Polynucleobacter necessarius subsp. necessarius (strain STIR1) protein is 3-hydroxyacyl-[acyl-carrier-protein] dehydratase FabZ.